A 592-amino-acid chain; its full sequence is Cytosolic purine 5'-nucleotidase (592 aa).

Over residues methionine 1–asparagine 15 the composition is skewed to low complexity. Residues methionine 1 to leucine 37 are disordered. The Nucleophile role is filled by aspartate 122. 2 residues coordinate IMP: aspartate 122 and aspartate 124. Mg(2+) is bound by residues aspartate 122 and aspartate 124. The Proton donor role is filled by aspartate 124. Residue asparagine 226 participates in ATP binding. Residues leucine 252–serine 273 form a disordered region. Residues glutamate 259–serine 273 show a composition bias toward polar residues. 7 residues coordinate IMP: arginine 299, aspartate 303, lysine 312, threonine 347, asparagine 348, serine 349, and lysine 385. Position 444 (aspartate 444) interacts with Mg(2+). Residues glutamine 547 and arginine 550 each coordinate ATP.

The protein belongs to the 5'(3')-deoxyribonucleotidase family. Homotetramer. Mg(2+) serves as cofactor.

It localises to the cytoplasm. The protein localises to the cytosol. The catalysed reaction is a ribonucleoside 5'-phosphate + H2O = a ribonucleoside + phosphate. It catalyses the reaction a 2'-deoxyribonucleoside + a ribonucleoside 5'-phosphate = a ribonucleoside + a 2'-deoxyribonucleoside 5'-phosphate. Functionally, broad specificity cytosolic 5'-nucleotidase that catalyzes the dephosphorylation of 6-hydroxypurine nucleoside 5'-monophosphates. In addition, possesses a phosphotransferase activity by which it can transfer a phosphate from a donor nucleoside monophosphate to an acceptor nucleoside. Through these activities regulates the purine nucleoside/nucleotide pools within the cell. This chain is Cytosolic purine 5'-nucleotidase (nt5c2), found in Dictyostelium discoideum (Social amoeba).